The following is a 275-amino-acid chain: Membrane protein insertase MisCB (275 aa).

A signal peptide spans 1 to 18; sequence MLKTYQKLLAMGIFLIVL. Residue Cys-19 is the site of N-palmitoyl cysteine attachment. Residue Cys-19 is the site of S-diacylglycerol cysteine attachment. A run of 5 helical transmembrane segments spans residues 63 to 83, 139 to 159, 172 to 192, 219 to 239, and 240 to 260; these read YGLS…PLFV, AMGC…YYAI, WFSL…MYFV, LMVF…PAAL, and PLYW…LQMT.

It belongs to the OXA1/ALB3/YidC family. Type 2 subfamily. As to quaternary structure, mostly monomeric, it may also form dimers. Interacts with SpoIIIAE. Forms a complex with the F(1)F(0) ATP synthase in which can be found the alpha, beta, gamma, delta and epsilon subunits of F(1) and a, b and subunits of F(0). YqgA is found in the same complex.

Its subcellular location is the cell membrane. Functionally, required for the insertion and/or proper folding and/or complex formation of integral membrane proteins into the membrane. Involved in integration of membrane proteins that insert both dependently and independently of the Sec translocase complex, as well as at least some lipoproteins. Also involved in protein secretion processes. It has an overlapping, although partly distinct, function compared to SpoIIIJ(MisCB). The protein is Membrane protein insertase MisCB (misCB) of Bacillus subtilis (strain 168).